Reading from the N-terminus, the 367-residue chain is Nuclear hormone receptor-like 1 (367 aa).

The nuclear receptor DNA-binding region spans 32-107; the sequence is GQPCVVCGDD…NGMTKSLVLN (76 aa). 2 consecutive NR C4-type zinc fingers follow at residues 35-55 and 71-95; these read CVVCGDDATGLHYRAITCEGC and CKSIERCEISKISRNICQFCRFQKC. The NR LBD domain maps to 145–367; the sequence is EFQSRIDQVT…IANILLFKFT (223 aa).

It belongs to the nuclear hormone receptor family.

The protein localises to the nucleus. The protein is Nuclear hormone receptor-like 1 (nhr-1) of Onchocerca volvulus.